Here is a 473-residue protein sequence, read N- to C-terminus: Keratin, type I cytoskeletal 16 (473 aa).

A head region spans residues Met-1–Ser-116. Residues Glu-117–Trp-152 form a coil 1A region. The 312-residue stretch at Glu-117–Leu-428 folds into the IF rod domain. Residues Tyr-153–Thr-170 are linker 1. Positions Ile-171 to Leu-262 are coil 1B. A linker 12 region spans residues Arg-263–Ile-285. Positions Leu-286–Glu-424 are coil 2. The tail stretch occupies residues Asp-425–Ser-473. The disordered stretch occupies residues Leu-428–Ser-473. Composition is skewed to low complexity over residues Ser-429–Ser-452 and Gln-462–Ser-473.

The protein belongs to the intermediate filament family. As to quaternary structure, heterodimer of a type I and a type II keratin. KRT16 associates with KRT6 isomers (KRT6A or KRT6B). Interacts with TCHP. Interacts with TRADD. Expressed in the corneal epithelium (at protein level).

Epidermis-specific type I keratin that plays a key role in skin. Acts as a regulator of innate immunity in response to skin barrier breach: required for some inflammatory checkpoint for the skin barrier maintenance. The protein is Keratin, type I cytoskeletal 16 (KRT16) of Homo sapiens (Human).